We begin with the raw amino-acid sequence, 176 residues long: 3-hydroxyanthranilate 3,4-dioxygenase (176 aa).

Arg-44 provides a ligand contact to O2. 3 residues coordinate Fe cation: His-48, Glu-54, and His-92. Glu-54 serves as a coordination point for substrate. Arg-96 and Glu-106 together coordinate substrate. Residues Cys-121, Cys-124, Cys-158, and Cys-161 each contribute to the Fe cation site.

Belongs to the 3-HAO family. In terms of assembly, homodimer. Fe(2+) is required as a cofactor.

It carries out the reaction 3-hydroxyanthranilate + O2 = (2Z,4Z)-2-amino-3-carboxymuconate 6-semialdehyde. Its pathway is cofactor biosynthesis; NAD(+) biosynthesis; quinolinate from L-kynurenine: step 3/3. Its function is as follows. Catalyzes the oxidative ring opening of 3-hydroxyanthranilate to 2-amino-3-carboxymuconate semialdehyde, which spontaneously cyclizes to quinolinate. The chain is 3-hydroxyanthranilate 3,4-dioxygenase from Xanthomonas campestris pv. campestris (strain B100).